Consider the following 302-residue polypeptide: Quinolinate synthase (302 aa).

Residues histidine 24 and serine 41 each contribute to the iminosuccinate site. Cysteine 86 serves as a coordination point for [4Fe-4S] cluster. Iminosuccinate is bound by residues 112-114 and serine 129; that span reads YVN. Cysteine 171 lines the [4Fe-4S] cluster pocket. Residues 197–199 and threonine 214 contribute to the iminosuccinate site; that span reads HPE. Cysteine 259 is a [4Fe-4S] cluster binding site.

Belongs to the quinolinate synthase family. Type 2 subfamily. [4Fe-4S] cluster serves as cofactor.

It localises to the cytoplasm. It carries out the reaction iminosuccinate + dihydroxyacetone phosphate = quinolinate + phosphate + 2 H2O + H(+). It functions in the pathway cofactor biosynthesis; NAD(+) biosynthesis; quinolinate from iminoaspartate: step 1/1. Its function is as follows. Catalyzes the condensation of iminoaspartate with dihydroxyacetone phosphate to form quinolinate. The chain is Quinolinate synthase from Dehalococcoides mccartyi (strain ATCC BAA-2266 / KCTC 15142 / 195) (Dehalococcoides ethenogenes (strain 195)).